We begin with the raw amino-acid sequence, 270 residues long: 5'-nucleotidase SurE (270 aa).

4 residues coordinate a divalent metal cation: Asp-8, Asp-9, Ser-40, and Asn-98.

The protein belongs to the SurE nucleotidase family. A divalent metal cation serves as cofactor.

The protein localises to the cytoplasm. It catalyses the reaction a ribonucleoside 5'-phosphate + H2O = a ribonucleoside + phosphate. In terms of biological role, nucleotidase that shows phosphatase activity on nucleoside 5'-monophosphates. This chain is 5'-nucleotidase SurE, found in Cyanothece sp. (strain PCC 7425 / ATCC 29141).